We begin with the raw amino-acid sequence, 302 residues long: Negative regulator of the PHO system (302 aa).

One can recognise a Protein kinase domain in the interval 6–296 (FKQLEKLGNG…AKQALLHPWF (291 aa)). Residues 12-20 (LGNGTYATV) and K35 each bind ATP. The active-site Proton acceptor is D132.

This sequence belongs to the protein kinase superfamily. CMGC Ser/Thr protein kinase family. CDC2/CDKX subfamily. As to quaternary structure, interacts with a number of cyclins.

It catalyses the reaction L-seryl-[protein] + ATP = O-phospho-L-seryl-[protein] + ADP + H(+). It carries out the reaction L-threonyl-[protein] + ATP = O-phospho-L-threonyl-[protein] + ADP + H(+). Its function is as follows. When phosphate concentrations are high it phosphorylates the PHO4 transcription factor thus establishing repression. This is Negative regulator of the PHO system (PHO85) from Candida glabrata (strain ATCC 2001 / BCRC 20586 / JCM 3761 / NBRC 0622 / NRRL Y-65 / CBS 138) (Yeast).